Reading from the N-terminus, the 471-residue chain is Cysteine--tRNA ligase (471 aa).

Cysteine 29 provides a ligand contact to Zn(2+). The 'HIGH' region signature appears at 31-41 (PTVYNYIHIGN). Positions 209, 234, and 238 each coordinate Zn(2+). The 'KMSKS' region signature appears at 266–270 (KMSKS). Residue lysine 269 participates in ATP binding.

Belongs to the class-I aminoacyl-tRNA synthetase family. In terms of assembly, monomer. It depends on Zn(2+) as a cofactor.

The protein resides in the cytoplasm. It catalyses the reaction tRNA(Cys) + L-cysteine + ATP = L-cysteinyl-tRNA(Cys) + AMP + diphosphate. This is Cysteine--tRNA ligase from Listeria welshimeri serovar 6b (strain ATCC 35897 / DSM 20650 / CCUG 15529 / CIP 8149 / NCTC 11857 / SLCC 5334 / V8).